A 154-amino-acid chain; its full sequence is Large ribosomal subunit protein uL13 (154 aa).

The protein belongs to the universal ribosomal protein uL13 family. Part of the 50S ribosomal subunit.

Its function is as follows. This protein is one of the early assembly proteins of the 50S ribosomal subunit, although it is not seen to bind rRNA by itself. It is important during the early stages of 50S assembly. The protein is Large ribosomal subunit protein uL13 of Bartonella henselae (strain ATCC 49882 / DSM 28221 / CCUG 30454 / Houston 1) (Rochalimaea henselae).